The sequence spans 290 residues: Ribosomal RNA small subunit methyltransferase A (290 aa).

Positions 27, 29, 54, 75, 100, and 125 each coordinate S-adenosyl-L-methionine.

It belongs to the class I-like SAM-binding methyltransferase superfamily. rRNA adenine N(6)-methyltransferase family. RsmA subfamily.

It localises to the cytoplasm. It catalyses the reaction adenosine(1518)/adenosine(1519) in 16S rRNA + 4 S-adenosyl-L-methionine = N(6)-dimethyladenosine(1518)/N(6)-dimethyladenosine(1519) in 16S rRNA + 4 S-adenosyl-L-homocysteine + 4 H(+). Its function is as follows. Specifically dimethylates two adjacent adenosines (A1518 and A1519) in the loop of a conserved hairpin near the 3'-end of 16S rRNA in the 30S particle. May play a critical role in biogenesis of 30S subunits. The sequence is that of Ribosomal RNA small subunit methyltransferase A from Streptococcus thermophilus (strain ATCC BAA-250 / LMG 18311).